The chain runs to 91 residues: Ribonuclease P protein component 4 (91 aa).

4 residues coordinate Zn(2+): Cys-48, Cys-51, Cys-71, and Cys-74.

The protein belongs to the eukaryotic/archaeal RNase P protein component 4 family. As to quaternary structure, consists of a catalytic RNA component and at least 4-5 protein subunits. Zn(2+) serves as cofactor.

It is found in the cytoplasm. It carries out the reaction Endonucleolytic cleavage of RNA, removing 5'-extranucleotides from tRNA precursor.. Part of ribonuclease P, a protein complex that generates mature tRNA molecules by cleaving their 5'-ends. The chain is Ribonuclease P protein component 4 from Picrophilus torridus (strain ATCC 700027 / DSM 9790 / JCM 10055 / NBRC 100828 / KAW 2/3).